The following is a 580-amino-acid chain: Peptide transporter PTR_B (580 aa).

Residues 1 to 30 (MSTEKLQNDDKVVDEKYVDADEHSLVRSQD) are compositionally biased toward basic and acidic residues. Residues 1–45 (MSTEKLQNDDKVVDEKYVDADEHSLVRSQDESFPQTEEGGEPTDH) are disordered. The helical transmembrane segment at 57 to 78 (IPMSCWLVAIVELSERFTYYGL) threads the bilayer. Residue asparagine 101 is glycosylated (N-linked (GlcNAc...) asparagine). The next 11 helical transmembrane spans lie at 107-127 (ALSYFWQFWCYVTPIFGAWIA), 134-154 (YFTICIFCIVMMVGIFILFIT), 163-183 (TTSLAGFIVAVIVIGIGTGGI), 219-239 (VSNVFMFFYLMINIGALSVIA), 249-269 (FWAAFLLPLCFFCVGILALVL), 326-346 (ALYACKVFAFYPIYWLVYGQM), 370-390 (INSITLIIFIPICERIVYPFI), 402-422 (IFWGFMFGAAAMVYAGVLQHF), 449-469 (IALQTPCYWLIGMSEIFASIT), 484-504 (SFIMSIFLLMNAFGSALGIAL), and 513-533 (MVWTFNGLGVSCFIAGWIFWF).

Belongs to the major facilitator superfamily. Proton-dependent oligopeptide transporter (POT/PTR) (TC 2.A.17) family.

It is found in the cell membrane. It carries out the reaction a dipeptide(out) + H(+)(out) = a dipeptide(in) + H(+)(in). It catalyses the reaction an L-amino acid tripeptide(out) + H(+)(out) = an L-amino acid tripeptide(in) + H(+)(in). Its function is as follows. Peptide transporter that exploits the inwardly directed proton motive force to facilitate the cellular uptake of di/tripeptides. Shows strong uptake specificity towards the dipeptides Tyr-Phe and Gly-His, when compared to PTR_A and PTR_C. This Candidozyma auris (Yeast) protein is Peptide transporter PTR_B.